Reading from the N-terminus, the 381-residue chain is Testis-specific expressed protein 55 (381 aa).

Disordered regions lie at residues methionine 1–histidine 176 and threonine 292–arginine 317. 2 stretches are compositionally biased toward basic and acidic residues: residues serine 8–asparagine 24 and arginine 65–threonine 103. Residues serine 104–serine 113 show a composition bias toward polar residues. The segment covering histidine 114–glycine 125 has biased composition (basic and acidic residues). Acidic residues predominate over residues threonine 134–aspartate 143. Composition is skewed to polar residues over residues serine 147–asparagine 163 and threonine 292–valine 302. Residues arginine 307–arginine 317 show a composition bias toward low complexity.

As to expression, testis-specific.

Its subcellular location is the nucleus. The sequence is that of Testis-specific expressed protein 55 from Mus musculus (Mouse).